A 411-amino-acid chain; its full sequence is Protein translocase subunit SecY (411 aa).

10 consecutive transmembrane segments (helical) span residues Phe13 to Asp33, Ile52 to Ile72, Ala111 to Phe131, Phe135 to Leu155, Gly163 to Leu180, Ser197 to Val217, Gly252 to Leu272, Leu291 to Val311, Phe350 to Ala370, and Gly377 to Ile397.

The protein belongs to the SecY/SEC61-alpha family. As to quaternary structure, component of the plastid Sec protein translocase complex, which is composed of at least SecY, SecE and SecG.

It is found in the plastid. The protein resides in the chloroplast thylakoid membrane. Its function is as follows. The central subunit of the protein translocation channel SecYE. Consists of two halves formed by TMs 1-5 and 6-10. These two domains form a lateral gate at the front which open onto the bilayer between TMs 2 and 7, and are clamped together by SecE at the back. The channel is closed by both a pore ring composed of hydrophobic SecY resides and a short helix (helix 2A) on the extracellular side of the membrane which forms a plug. This chain is Protein translocase subunit SecY, found in Porphyra purpurea (Red seaweed).